Reading from the N-terminus, the 197-residue chain is GTP cyclohydrolase-2 (197 aa).

GTP is bound at residue 49-53; it reads RVHSE. Positions 54, 65, and 67 each coordinate Zn(2+). GTP-binding positions include Gln-70, 92 to 94, and Thr-114; that span reads EGR. Asp-126 functions as the Proton acceptor in the catalytic mechanism. Arg-128 serves as the catalytic Nucleophile. Thr-149 and Lys-154 together coordinate GTP.

The protein belongs to the GTP cyclohydrolase II family. In terms of assembly, homodimer. It depends on Zn(2+) as a cofactor.

It catalyses the reaction GTP + 4 H2O = 2,5-diamino-6-hydroxy-4-(5-phosphoribosylamino)-pyrimidine + formate + 2 phosphate + 3 H(+). The protein operates within cofactor biosynthesis; riboflavin biosynthesis; 5-amino-6-(D-ribitylamino)uracil from GTP: step 1/4. Catalyzes the conversion of GTP to 2,5-diamino-6-ribosylamino-4(3H)-pyrimidinone 5'-phosphate (DARP), formate and pyrophosphate. This chain is GTP cyclohydrolase-2, found in Cronobacter sakazakii (strain ATCC BAA-894) (Enterobacter sakazakii).